Consider the following 345-residue polypeptide: RNA pseudouridine synthase 1 (345 aa).

Residue D134 is part of the active site.

This sequence belongs to the pseudouridine synthase RluA family.

The catalysed reaction is a uridine in RNA = a pseudouridine in RNA. This is RNA pseudouridine synthase 1 from Oryza sativa subsp. japonica (Rice).